Reading from the N-terminus, the 266-residue chain is Small ribosomal subunit protein uS2 (266 aa).

Residues 247 to 266 (EGENNYSNNRSWNKPERTNN) are disordered. Over residues 249–258 (ENNYSNNRSW) the composition is skewed to polar residues.

Belongs to the universal ribosomal protein uS2 family.

The protein is Small ribosomal subunit protein uS2 of Mesoplasma florum (strain ATCC 33453 / NBRC 100688 / NCTC 11704 / L1) (Acholeplasma florum).